The sequence spans 433 residues: 3-deoxy-D-manno-octulosonic acid transferase (433 aa).

The chain crosses the membrane as a helical; Signal-anchor span at residues 11-31 (TFLYDCFLIFAFMVGLPRILY). The active-site Proton acceptor is Glu-70. Residues 277–278 (PR), 317–319 (IGW), and 344–347 (NLLE) contribute to the CMP site.

This sequence belongs to the glycosyltransferase group 1 family. Glycosyltransferase 30 subfamily.

The protein resides in the cell inner membrane. The enzyme catalyses lipid IVA (E. coli) + CMP-3-deoxy-beta-D-manno-octulosonate = alpha-Kdo-(2-&gt;6)-lipid IVA (E. coli) + CMP + H(+). It catalyses the reaction alpha-Kdo-(2-&gt;6)-lipid IVA (E. coli) + CMP-3-deoxy-beta-D-manno-octulosonate = alpha-Kdo-(2-&gt;4)-alpha-Kdo-(2-&gt;6)-lipid IVA (E. coli) + CMP + H(+). It carries out the reaction alpha-Kdo-(2-&gt;4)-alpha-Kdo-(2-&gt;6)-lipid IVA (E. coli) + CMP-3-deoxy-beta-D-manno-octulosonate = alpha-Kdo-(2-&gt;8)-alpha-Kdo-(2-&gt;4)-alpha-Kdo-(2-&gt;6)-lipid IVA (E. coli) + CMP + H(+). The catalysed reaction is alpha-Kdo-(2-&gt;8)-alpha-Kdo-(2-&gt;4)-alpha-Kdo-(2-&gt;6)-lipid IVA (E. coli) + CMP-3-deoxy-beta-D-manno-octulosonate = alpha-Kdo-(2-&gt;8)-[alpha-Kdo-(2-&gt;4)]-alpha-Kdo-(2-&gt;4)-alpha-Kdo-(2-&gt;6)-lipid IVA + CMP + H(+). Its pathway is bacterial outer membrane biogenesis; LPS core biosynthesis. Functionally, involved in lipopolysaccharide (LPS) biosynthesis. Catalyzes the transfer of predominantly four 3-deoxy-D-manno-octulosonate (Kdo) residues from CMP-Kdo to lipid IV(A), the tetraacyldisaccharide-1,4'-bisphosphate precursor of lipid A. Thus generates the genus-specific LPS epitope of Chlamydia, composed of the trisaccharide alpha-Kdo-(2-&gt;8)-alpha-Kdo-(2-&gt;4)-alpha-Kdo. The sequence is that of 3-deoxy-D-manno-octulosonic acid transferase (waaA) from Chlamydophila psittaci (strain ATCC VR-125 / 6BC) (Chlamydia psittaci).